The chain runs to 299 residues: Protoheme IX farnesyltransferase (299 aa).

9 helical membrane passes run 17 to 37, 41 to 61, 91 to 111, 113 to 133, 141 to 161, 168 to 188, 207 to 227, 228 to 248, and 266 to 286; these read VVAL…PAPY, GLLV…AAVF, ALMW…LFVN, ITMV…TLYL, IVIG…AVSG, ACLL…ALAI, GLAY…LVSL, LPYL…ALGI, and IAWC…VTLL.

It belongs to the UbiA prenyltransferase family. Protoheme IX farnesyltransferase subfamily.

It localises to the cell inner membrane. The catalysed reaction is heme b + (2E,6E)-farnesyl diphosphate + H2O = Fe(II)-heme o + diphosphate. It participates in porphyrin-containing compound metabolism; heme O biosynthesis; heme O from protoheme: step 1/1. Converts heme B (protoheme IX) to heme O by substitution of the vinyl group on carbon 2 of heme B porphyrin ring with a hydroxyethyl farnesyl side group. The protein is Protoheme IX farnesyltransferase of Ruthia magnifica subsp. Calyptogena magnifica.